The sequence spans 388 residues: Lipid-A-disaccharide synthase (388 aa).

This sequence belongs to the LpxB family.

The catalysed reaction is a lipid X + a UDP-2-N,3-O-bis[(3R)-3-hydroxyacyl]-alpha-D-glucosamine = a lipid A disaccharide + UDP + H(+). It participates in bacterial outer membrane biogenesis; LPS lipid A biosynthesis. Condensation of UDP-2,3-diacylglucosamine and 2,3-diacylglucosamine-1-phosphate to form lipid A disaccharide, a precursor of lipid A, a phosphorylated glycolipid that anchors the lipopolysaccharide to the outer membrane of the cell. The protein is Lipid-A-disaccharide synthase of Sulfurihydrogenibium sp. (strain YO3AOP1).